A 156-amino-acid chain; its full sequence is CD-NTase/cGAS isopeptidase (156 aa).

Residues 16-156 (LVVIMGHVVT…LITVFKKIES (141 aa)) form the MPN domain. The active-site Proton donor/acceptor is Glu39. Zn(2+) contacts are provided by His101, His103, and Asp114. Residues 101–114 (HTHPEDRPFPSATD) carry the JAMM motif motif.

This sequence belongs to the peptidase M67B family. Cap3 isopeptidase subfamily. Requires Zn(2+) as cofactor.

Its activity is regulated as follows. Cleavage of conjugated proteins is inhibited by EDTA. Metalloprotease priming reversal component of a CBASS system. CBASS (cyclic oligonucleotide-based antiphage signaling system) provides immunity against bacteriophages. The CD-NTase protein (DncV) synthesizes cyclic nucleotides in response to infection; these serve as specific second messenger signals. The signals activate a diverse range of effectors, leading to bacterial cell death and thus abortive phage infection. A type II-A(GA) CBASS system. Functionally, reverses the primed state of DncV, the CD-NTase. Cleaves a DncV-GFP (green fluorescent protein) fusion protein precisely at the C-terminus of DncV. Overexpression decreases the efficacy of CBASS protection against phages T2, T4, T5 and T6, blocks formation of DncV-conjugates in vivo, and inhibits in vivo activation of DncV. Antagonism of phage defense upon overexpression is CBASS-system specific, Cap3 from this bacteria only antagonizes its cognate CBASS system and not that of C.freundii, E.coli or E.hormaechei. In terms of biological role, protects E.coli against phage infection. When the CBASS operon (capV-dncV-cap2-cap3) is introduced in E.coli MG1655 there is about 100-fold protection against phages P1 and T2. When the operon is introduced in E.coli MG1655 there is a more than 10(3) decrease in the efficiency of T2 plaque formation. Protects 100-fold against phage T5, offers no protection against T7. When the operon is introduced in E.coli MG1655 it protects against phages T2, T4, T5 and T6. Another paper shows the operon confers protection against phages P1, T2, T5 and T6 but not T4 or lambda. This chain is CD-NTase/cGAS isopeptidase, found in Vibrio cholerae serotype O1 (strain ATCC 39315 / El Tor Inaba N16961).